The primary structure comprises 587 residues: Ran GTPase-activating protein 1 (587 aa).

Residue Ala-2 is modified to N-acetylalanine. Lys-8 participates in a covalent cross-link: Glycyl lysine isopeptide (Lys-Gly) (interchain with G-Cter in SUMO1); alternate. Lys-8 is covalently cross-linked (Glycyl lysine isopeptide (Lys-Gly) (interchain with G-Cter in SUMO2); alternate). A Glycyl lysine isopeptide (Lys-Gly) (interchain with G-Cter in SUMO2) cross-link involves residue Lys-15. Position 24 is a phosphoserine (Ser-24). 4 LRR repeats span residues Phe-48–Lys-71, Gly-111–Ala-134, Ile-207–Gln-230, and Asn-235–Glu-258. Lys-279 is covalently cross-linked (Glycyl lysine isopeptide (Lys-Gly) (interchain with G-Cter in SUMO2)). LRR repeat units follow at residues Leu-292 to Asp-319 and Lys-320 to Glu-343. Ser-301 bears the Phosphoserine mark. The tract at residues Leu-357–Pro-430 is disordered. Ser-358 carries the phosphoserine modification. Over residues Ser-358–Glu-397 the composition is skewed to acidic residues. The segment covering Gln-400–Pro-410 has biased composition (polar residues). Thr-409 carries the phosphothreonine; by CDK2 modification. A phosphoserine mark is found at Ser-428 and Ser-435. A Phosphothreonine modification is found at Thr-436. A Phosphoserine modification is found at Ser-442. Lys-452 is covalently cross-linked (Glycyl lysine isopeptide (Lys-Gly) (interchain with G-Cter in SUMO2)). The SUMO conjugation signature appears at Leu-523 to Glu-526. Residue Lys-524 forms a Glycyl lysine isopeptide (Lys-Gly) (interchain with G-Cter in SUMO1); alternate linkage. Lys-524 is covalently cross-linked (Glycyl lysine isopeptide (Lys-Gly) (interchain with G-Cter in SUMO2); alternate). Lys-524 bears the N6-acetyllysine; alternate mark. Residue Lys-586 forms a Glycyl lysine isopeptide (Lys-Gly) (interchain with G-Cter in SUMO2) linkage.

This sequence belongs to the RNA1 family. In terms of assembly, homodimer. Interacts with RAN. Forms a complex with RANBP2/NUP358, NXF1 and NXT1. Forms a tight complex in association with RANBP2/NUP358 and UBE2I/UBC9, the ubiquitin-conjugating enzyme E2. Interacts with UBE2I; the interaction conjugates SUMO1 to RANGAP1, and subsequently stabilizes interactions of sumoylated RANGAP1 with RANBP2/NUP358. The complex composed of RANBP2, SUMO1, RANGAP1 and UBE2I associates with nuclear pore complexes. Identified in a complex composed of RAN, RANBP2, sumoylated RANGAP1, UBE2I and XPO1. Identified in a complex composed of RAN, RANGAP1 and RANBP1. Interacts with TRAF6. Interacts with SUMO1 and SENP1. Interacts (when sumoylated) with MYCBP2; interaction inhibits MYCBP2 E3 ubiquitin-protein ligase activity and promotes MYCBP2 translocation to the nucleus. Post-translationally, phosphorylation occurs before nuclear envelope breakdown and continues throughout mitosis. Phosphorylated by the M-phase kinase cyclin B/Cdk1, in vitro. Differential timimg of dephosphorylation occurs during phases of mitosis. The phosphorylated form remains associated with RANBP2/NUP358 and the SUMO E2-conjugating enzyme, UBE2I, on nuclear pore complex (NPC) diassembly and during mitosis. In terms of processing, sumoylated. Sumoylation is necessary for targeting to the nuclear envelope (NE), and for association with mitotic spindles and kinetochores during mitosis. Also required for interaction with RANBP2 and is mediated by UBE2I. Desumoylated by HINT1. As to expression, highly expressed in brain, thymus and testis.

The protein resides in the cytoplasm. The protein localises to the nucleus. It localises to the nucleoplasm. Its subcellular location is the nucleus envelope. It is found in the chromosome. The protein resides in the centromere. The protein localises to the kinetochore. It localises to the cytoskeleton. Its subcellular location is the spindle. Its function is as follows. GTPase activator for RAN. Converts cytoplasmic GTP-bound RAN to GDP-bound RAN, which is essential for RAN-mediated nuclear import and export. Mediates dissociation of cargo from nuclear export complexes containing XPO1, RAN and RANBP2 after nuclear export. The polypeptide is Ran GTPase-activating protein 1 (RANGAP1) (Homo sapiens (Human)).